The primary structure comprises 198 residues: Large ribosomal subunit protein uL13B (198 aa).

Ser-2 carries the N-acetylserine; partial modification. Residue Ser-43 is modified to Phosphoserine. Lys-176 is covalently cross-linked (Glycyl lysine isopeptide (Lys-Gly) (interchain with G-Cter in ubiquitin)). 3 positions are modified to phosphoserine: Ser-181, Ser-185, and Ser-187.

Belongs to the universal ribosomal protein uL13 family. As to quaternary structure, component of the large ribosomal subunit (LSU). Mature yeast ribosomes consist of a small (40S) and a large (60S) subunit. The 40S small subunit contains 1 molecule of ribosomal RNA (18S rRNA) and 33 different proteins (encoded by 57 genes). The large 60S subunit contains 3 rRNA molecules (25S, 5.8S and 5S rRNA) and 46 different proteins (encoded by 81 genes). Post-translationally, N-terminally acetylated by acetyltransferase NatA.

It localises to the cytoplasm. Its function is as follows. Component of the ribosome, a large ribonucleoprotein complex responsible for the synthesis of proteins in the cell. The small ribosomal subunit (SSU) binds messenger RNAs (mRNAs) and translates the encoded message by selecting cognate aminoacyl-transfer RNA (tRNA) molecules. The large subunit (LSU) contains the ribosomal catalytic site termed the peptidyl transferase center (PTC), which catalyzes the formation of peptide bonds, thereby polymerizing the amino acids delivered by tRNAs into a polypeptide chain. The nascent polypeptides leave the ribosome through a tunnel in the LSU and interact with protein factors that function in enzymatic processing, targeting, and the membrane insertion of nascent chains at the exit of the ribosomal tunnel. This is Large ribosomal subunit protein uL13B from Saccharomyces cerevisiae (strain ATCC 204508 / S288c) (Baker's yeast).